We begin with the raw amino-acid sequence, 491 residues long: Neuronal acetylcholine receptor subunit beta-2 (491 aa).

A signal peptide spans 1–18 (MALLRVLCLLAALRRSLC). The Extracellular portion of the chain corresponds to 19 to 226 (TDTEERLVEY…ITYDFIIRRK (208 aa)). N-linked (GlcNAc...) asparagine glycosylation is found at asparagine 44 and asparagine 161. A disulfide bond links cysteine 148 and cysteine 162. Residues 227–251 (PLFYTINLIIPCILITSLAILVFYL) form a helical membrane-spanning segment. Residues 252–258 (PSDCGEK) are Cytoplasmic-facing. Residues 259–277 (MTLCISVLLALTVFLLLIS) form a helical membrane-spanning segment. Residues 278–292 (KIVPPTSLDVPLVGK) lie on the Extracellular side of the membrane. The chain crosses the membrane as a helical span at residues 293–314 (YLMFTMVLVTFSIVTSVCVLNV). Residues 315 to 449 (HHRSPTTHTM…WKYVAMVIDR (135 aa)) are Cytoplasmic-facing. Residues 450-468 (LFLWIFVFVCVFGTVGMFL) traverse the membrane as a helical segment.

Belongs to the ligand-gated ion channel (TC 1.A.9) family. Acetylcholine receptor (TC 1.A.9.1) subfamily. Beta-2/CHRNB2 sub-subfamily. Neuronal AChR is a heteropentamer composed of two different types of subunits: alpha and beta. CHRNB2/Beta-2 subunit can be combined to CHRNA2/alpha-2, CHRNA3/alpha-3 or CHRNA4/alpha-4, CHRNA5/alpha-5, CHRNA6/alpha-6 and CHRNB3/beta-3 to give rise to functional receptors.

It localises to the synaptic cell membrane. It is found in the cell membrane. The enzyme catalyses Ca(2+)(in) = Ca(2+)(out). The catalysed reaction is K(+)(in) = K(+)(out). It carries out the reaction Na(+)(in) = Na(+)(out). Its activity is regulated as follows. Activated by a myriad of ligands such as acetylcholine, cytisine, nicotine, choline and epibatidine. nAChR activity is inhibited by the antagonist alpha-conotoxins BuIA, PnIA, PnIC, GID and MII, small disulfide-constrained peptides from cone snails. Component of neuronal acetylcholine receptors (nAChRs) that function as pentameric, ligand-gated cation channels with high calcium permeability among other activities. nAChRs are excitatory neurotrasnmitter receptors formed by a collection of nAChR subunits known to mediate synaptic transmission in the nervous system and the neuromuscular junction. Each nAchR subunit confers differential attributes to channel properties, including activation, deactivation and desensitization kinetics, pH sensitivity, cation permeability, and binding to allosteric modulators. CHRNB2 forms heteropentameric neuronal acetylcholine receptors with CHRNA2, CHRNA3, CHRNA4 and CHRNA6, as well as CHRNA5 and CHRNB3 as accesory subunits. This Gallus gallus (Chicken) protein is Neuronal acetylcholine receptor subunit beta-2 (CHRNB2).